The following is a 552-amino-acid chain: Chaperonin GroEL (552 aa).

Residues 30–33 (TLGP), lysine 51, 87–91 (DGTTT), glycine 415, and aspartate 496 contribute to the ATP site.

Belongs to the chaperonin (HSP60) family. Forms a cylinder of 14 subunits composed of two heptameric rings stacked back-to-back. Interacts with the co-chaperonin GroES.

Its subcellular location is the cytoplasm. It carries out the reaction ATP + H2O + a folded polypeptide = ADP + phosphate + an unfolded polypeptide.. In terms of biological role, together with its co-chaperonin GroES, plays an essential role in assisting protein folding. The GroEL-GroES system forms a nano-cage that allows encapsulation of the non-native substrate proteins and provides a physical environment optimized to promote and accelerate protein folding. This Paramagnetospirillum magneticum (strain ATCC 700264 / AMB-1) (Magnetospirillum magneticum) protein is Chaperonin GroEL.